The primary structure comprises 696 residues: MELGSCFKTYEDFKECFSAYKRENRCSFILRDCVSVRFHNLNHGTSIREDILYVQVKFVCIRTQSNRKRTREADMCPAYLLLRYNERLDRLFISELNTQHIHGDSKVASPGGDTTGKSQKTMCLQRLQPVQPTTKKDLDTAEKSLVEPSFCLDKVQVSSKPEQEGITPSDLAKIAKVMKNFLKVDEGSMASFSVGDSQHLDRLSFQSSKMTDLFIRFPENLLLHRVENTQGHILYAFLVENKERESRVVHFAVLKAETVTSVAKMLSIFTEFNSDWPKVKVVFVDPSFHYRAILQEIFPAARILLSIYHTTRLLEKKLHRSSANPSFKRLMKEALREAVFVTSEASLKNLCQMSQAVLDEDLFNFLQAHWFTCELLWYMHVRKGLLACNTYMDSLDIVTSKVSSLFREQQSLLDCILCFVDYIDFFNTKGLKNLPTPPPKLKRARPASMPLKSKKAFGICGESLTSLPAEETKPDAQQVQVQQQSQVPPSQVGMLDTLHQSGSELAYKLCHNEWEVVQNSTHLVDMAGSSVDVQLLEDSHQVSKDGCSCSCSFQQWYHLPCRHILALLHTSQQPVGEAMVCRRWQKKYQYLLGPNGELQDRGMVPNTGQPEKQGRNDMIQDLSRELANLLMQTEGPELEERYSTLRKIVDIWAGPSQPSELFQQPGDFKDVGRLPFLWGKQEEGEGFPPATAVMHY.

An SWIM-type zinc finger spans residues 531–572; the sequence is VDVQLLEDSHQVSKDGCSCSCSFQQWYHLPCRHILALLHTSQ.

The polypeptide is Zinc finger SWIM domain-containing protein 3 (ZSWIM3) (Homo sapiens (Human)).